Consider the following 887-residue polypeptide: Translation initiation factor IF-2 (887 aa).

The tract at residues 1–291 is disordered; the sequence is MTDQADTSER…RRRVERERKK (291 aa). Residues 58 to 117 are compositionally biased toward low complexity; it reads AAPAAAPAAAPAAAEEVAKKPVAAPEVKPAAPVEERPAPVAKAAPEVKAVPAPAPAAAPA. 4 stretches are compositionally biased toward basic and acidic residues: residues 148 to 178, 185 to 194, 201 to 215, and 267 to 276; these read SAREREGEDRRRAEEEARRFAEEDARREAER, AAEEASRHTA, RAAEEAKRRLDDDRP, and AFDDESERQR. Residues 385–553 form the tr-type G domain; it reads ARAPVVTVMG…TILLQAELLD (169 aa). The interval 394 to 401 is G1; it reads GHVDHGKT. A GTP-binding site is contributed by 394–401; it reads GHVDHGKT. The G2 stretch occupies residues 419–423; that stretch reads GITQH. The interval 441-444 is G3; sequence DTPG. Residues 441–445 and 495–498 each bind GTP; these read DTPGH and NKMD. The G4 stretch occupies residues 495–498; sequence NKMD. Residues 531–533 are G5; that stretch reads SAK.

It belongs to the TRAFAC class translation factor GTPase superfamily. Classic translation factor GTPase family. IF-2 subfamily.

The protein resides in the cytoplasm. In terms of biological role, one of the essential components for the initiation of protein synthesis. Protects formylmethionyl-tRNA from spontaneous hydrolysis and promotes its binding to the 30S ribosomal subunits. Also involved in the hydrolysis of GTP during the formation of the 70S ribosomal complex. The sequence is that of Translation initiation factor IF-2 from Parvibaculum lavamentivorans (strain DS-1 / DSM 13023 / NCIMB 13966).